A 314-amino-acid polypeptide reads, in one-letter code: Mitochondrial 2-oxoglutarate/malate carrier protein (314 aa).

The residue at position 2 (A2) is an N-acetylalanine. Residue S6 is modified to Phosphoserine. Solcar repeat units follow at residues 23–108 (VKFL…LFER), 117–208 (PGFL…SKQF), and 217–306 (DNIL…MNKA). Residues 24-42 (KFLFGGLAGMGATVFVQPL) form a helical membrane-spanning segment. K57 carries the post-translational modification N6-succinyllysine. N6-acetyllysine is present on K73. The chain crosses the membrane as a helical span at residues 83 to 101 (GLSAGLLRQATYTTTRLGI). Y102 bears the Phosphotyrosine mark. 3 consecutive transmembrane segments (helical) span residues 119 to 140 (FLLKALIGMTAGATGAFVGPPA), 183 to 202 (GCIPTMARAVVVNAAQLASY), and 222 to 240 (HFCAIMISGLVTTAASMPV). Residue K256 is modified to N6-acetyllysine. A helical transmembrane segment spans residues 281–300 (GFTPYYARLGPHTVLTFIFL).

This sequence belongs to the mitochondrial carrier (TC 2.A.29) family. Interacts with SMIM26. As to expression, expressed in liver, heart and brain.

Its subcellular location is the mitochondrion inner membrane. It catalyses the reaction (S)-malate(in) + 2-oxoglutarate(out) = (S)-malate(out) + 2-oxoglutarate(in). The enzyme catalyses malonate(in) + 2-oxoglutarate(out) = malonate(out) + 2-oxoglutarate(in). The catalysed reaction is succinate(in) + 2-oxoglutarate(out) = succinate(out) + 2-oxoglutarate(in). It carries out the reaction maleate(in) + 2-oxoglutarate(out) = maleate(out) + 2-oxoglutarate(in). It catalyses the reaction oxaloacetate(in) + 2-oxoglutarate(out) = oxaloacetate(out) + 2-oxoglutarate(in). In terms of biological role, catalyzes the transport of 2-oxoglutarate (alpha-oxoglutarate) across the inner mitochondrial membrane in an electroneutral exchange for malate. Can also exchange 2-oxoglutarate for other dicarboxylic acids such as malonate, succinate, maleate and oxaloacetate, although with lower affinity. Contributes to several metabolic processes, including the malate-aspartate shuttle, the oxoglutarate/isocitrate shuttle, in gluconeogenesis from lactate, and in nitrogen metabolism. Maintains mitochondrial fusion and fission events, and the organization and morphology of cristae. Involved in the regulation of apoptosis. Helps protect from cytotoxic-induced apoptosis by modulating glutathione levels in mitochondria. This Rattus norvegicus (Rat) protein is Mitochondrial 2-oxoglutarate/malate carrier protein (Slc25a11).